Here is a 590-residue protein sequence, read N- to C-terminus: Bacillolysin (590 aa).

The N-terminal stretch at 1–24 (MKKVWFSLLGGAMLLGSVASGASA) is a signal peptide. Positions 25–286 (ESSVSGPAQL…GSIVFQYDII (262 aa)) are cleaved as a propeptide — activation peptide. Ca(2+) is bound by residues Asp339, Asp341, and Asp419. Zn(2+) is bound at residue His423. Glu424 is a catalytic residue. The Zn(2+) site is built by His427 and Glu447. Ca(2+) is bound by residues Asp466, Tyr469, Thr470, Ile473, and Asp476. Catalysis depends on His507, which acts as the Proton donor.

It belongs to the peptidase M4 family. Ca(2+) is required as a cofactor. Zn(2+) serves as cofactor.

It localises to the secreted. It catalyses the reaction Similar, but not identical, to that of thermolysin.. Involved in the generation of beta- and alpha-amylases from the large amylase precursor. The sequence is that of Bacillolysin (npr) from Paenibacillus polymyxa (Bacillus polymyxa).